A 128-amino-acid chain; its full sequence is Cystatin-2 (128 aa).

A signal peptide spans 1 to 19 (MSSFKVAVLLIAVYGASQG). The region spanning 29–116 (QDPTEARFLE…CVAVIYHVPW (88 aa)) is the Cystatin domain. 2 disulfide bridges follow: Cys84–Cys96 and Cys107–Cys127.

It belongs to the cystatin family. Widely expressed. Detected in salivary glands (at protein level), gut (at protein level), ovaries, and Malpighian tubules.

The protein resides in the secreted. Inhibitor of cysteine proteinases with broad specificity for mammalian cathepsins, including endopeptidases (cathepsins L and S) and exopeptidases (cathepsins B, C and H). Also inhibits endogenous cathepsin B-like and cathepsin C-like proteinases. Does not inhibit human legumain. May mimic specific host-derived cystatin(s) to interfere with its/their function in controlling cathepsin-mediated proteolysis. Affects the function of antigen-presenting mouse dendritic cells by reducing the production of the pro-inflammatory cytokines TNF and interleukin-12, and proliferation of antigen-specific CD4+ T-cells, suggesting it may suppress the host adaptive immune response. It is noteworthy that immunization of mice with this protein reduces O.moubata survival in infestation experiments. This chain is Cystatin-2, found in Ornithodoros moubata (Soft tick).